A 510-amino-acid chain; its full sequence is Beta-glucosidase 40 (510 aa).

Residues 1-29 form the signal peptide; that stretch reads MAHRRLIMTMTKMMMMVTMMMMMDKTCIC. Residues Q51, H152, and 197 to 198 contribute to the a beta-D-glucoside site; that span reads NE. E198 acts as the Proton donor in catalysis. A disulfide bridge connects residues C217 and C225. N229 and N278 each carry an N-linked (GlcNAc...) asparagine glycan. Position 341 (Y341) interacts with a beta-D-glucoside. N349 carries N-linked (GlcNAc...) asparagine glycosylation. Residues E414, W464, 471 to 472, and F480 each bind a beta-D-glucoside; that span reads EW. E414 functions as the Nucleophile in the catalytic mechanism. N507 carries N-linked (GlcNAc...) asparagine glycosylation.

The protein belongs to the glycosyl hydrolase 1 family.

It carries out the reaction Hydrolysis of terminal, non-reducing beta-D-glucosyl residues with release of beta-D-glucose.. The polypeptide is Beta-glucosidase 40 (Arabidopsis thaliana (Mouse-ear cress)).